Reading from the N-terminus, the 105-residue chain is Protein SMALL AUXIN UP-REGULATED RNA 16 (105 aa).

Belongs to the ARG7 family. Expressed in etiolated hypocotyls, cotyledons, leaves, flowers and siliques.

Its subcellular location is the cell membrane. Provide a mechanistic link between auxin and plasma membrane H(+)-ATPases (PM H(+)-ATPases, e.g. AHA1 and AHA2), and triggers PM H(+)-ATPases activity by promoting phosphorylation of their C-terminal autoinhibitory domain as a result of PP2C-D subfamily of type 2C phosphatases inhibition, thus leading to the acidification of the apoplast and the facilitation of solutes and water uptake to drive cell expansion. Triggers plant growth probably by promoting cell elongation. Regulates branch angles and bending. The polypeptide is Protein SMALL AUXIN UP-REGULATED RNA 16 (Arabidopsis thaliana (Mouse-ear cress)).